The sequence spans 157 residues: Crossover junction endodeoxyribonuclease RuvC (157 aa).

Active-site residues include Asp7, Glu67, and Asp140. 3 residues coordinate Mg(2+): Asp7, Glu67, and Asp140.

It belongs to the RuvC family. In terms of assembly, homodimer which binds Holliday junction (HJ) DNA. The HJ becomes 2-fold symmetrical on binding to RuvC with unstacked arms; it has a different conformation from HJ DNA in complex with RuvA. In the full resolvosome a probable DNA-RuvA(4)-RuvB(12)-RuvC(2) complex forms which resolves the HJ. It depends on Mg(2+) as a cofactor.

Its subcellular location is the cytoplasm. It carries out the reaction Endonucleolytic cleavage at a junction such as a reciprocal single-stranded crossover between two homologous DNA duplexes (Holliday junction).. Functionally, the RuvA-RuvB-RuvC complex processes Holliday junction (HJ) DNA during genetic recombination and DNA repair. Endonuclease that resolves HJ intermediates. Cleaves cruciform DNA by making single-stranded nicks across the HJ at symmetrical positions within the homologous arms, yielding a 5'-phosphate and a 3'-hydroxyl group; requires a central core of homology in the junction. The consensus cleavage sequence is 5'-(A/T)TT(C/G)-3'. Cleavage occurs on the 3'-side of the TT dinucleotide at the point of strand exchange. HJ branch migration catalyzed by RuvA-RuvB allows RuvC to scan DNA until it finds its consensus sequence, where it cleaves and resolves the cruciform DNA. This Rickettsia prowazekii (strain Madrid E) protein is Crossover junction endodeoxyribonuclease RuvC.